A 550-amino-acid polypeptide reads, in one-letter code: Chaperonin GroEL (550 aa).

ATP is bound by residues Thr-30–Pro-33, Lys-51, Asp-87–Thr-91, Gly-414, and Asp-494.

Belongs to the chaperonin (HSP60) family. Forms a cylinder of 14 subunits composed of two heptameric rings stacked back-to-back. Interacts with the co-chaperonin GroES.

The protein localises to the cytoplasm. It catalyses the reaction ATP + H2O + a folded polypeptide = ADP + phosphate + an unfolded polypeptide.. Its function is as follows. Together with its co-chaperonin GroES, plays an essential role in assisting protein folding. The GroEL-GroES system forms a nano-cage that allows encapsulation of the non-native substrate proteins and provides a physical environment optimized to promote and accelerate protein folding. The sequence is that of Chaperonin GroEL from Buchnera aphidicola subsp. Thelaxes suberi.